Reading from the N-terminus, the 139-residue chain is NAD(P) transhydrogenase subunit alpha part 2 (139 aa).

3 helical membrane-spanning segments follow: residues 49–69 (FWWL…VVWS), 78–98 (LMGV…IATG), and 107–127 (VLGF…FIVT).

As to quaternary structure, complex of an alpha and a beta chain; in Rhodospirillum, the alpha chain seems to be made of two subunits.

It is found in the cell inner membrane. The catalysed reaction is NAD(+) + NADPH + H(+)(in) = NADH + NADP(+) + H(+)(out). In terms of biological role, the transhydrogenation between NADH and NADP is coupled to respiration and ATP hydrolysis and functions as a proton pump across the membrane. The chain is NAD(P) transhydrogenase subunit alpha part 2 (pntAB) from Rhodospirillum rubrum (strain ATCC 11170 / ATH 1.1.1 / DSM 467 / LMG 4362 / NCIMB 8255 / S1).